Consider the following 273-residue polypeptide: Bis(5'-nucleosyl)-tetraphosphatase, symmetrical (273 aa).

Belongs to the Ap4A hydrolase family.

The enzyme catalyses P(1),P(4)-bis(5'-adenosyl) tetraphosphate + H2O = 2 ADP + 2 H(+). Functionally, hydrolyzes diadenosine 5',5'''-P1,P4-tetraphosphate to yield ADP. The sequence is that of Bis(5'-nucleosyl)-tetraphosphatase, symmetrical (apaH) from Buchnera aphidicola subsp. Schizaphis graminum (strain Sg).